The chain runs to 426 residues: Enolase (426 aa).

Glutamine 163 serves as a coordination point for (2R)-2-phosphoglycerate. Glutamate 205 acts as the Proton donor in catalysis. Positions 242, 285, and 312 each coordinate Mg(2+). (2R)-2-phosphoglycerate contacts are provided by lysine 337, arginine 366, serine 367, and lysine 388. Lysine 337 (proton acceptor) is an active-site residue.

Belongs to the enolase family. The cofactor is Mg(2+).

It is found in the cytoplasm. The protein resides in the secreted. It localises to the cell surface. It carries out the reaction (2R)-2-phosphoglycerate = phosphoenolpyruvate + H2O. Its pathway is carbohydrate degradation; glycolysis; pyruvate from D-glyceraldehyde 3-phosphate: step 4/5. In terms of biological role, catalyzes the reversible conversion of 2-phosphoglycerate (2-PG) into phosphoenolpyruvate (PEP). It is essential for the degradation of carbohydrates via glycolysis. This Gluconobacter oxydans (strain 621H) (Gluconobacter suboxydans) protein is Enolase.